The primary structure comprises 263 residues: Coiled-coil domain-containing protein 172 (263 aa).

Residues 13-191 (TEHQAEESRR…LKVLKDEETE (179 aa)) adopt a coiled-coil conformation.

This sequence belongs to the CCDC172 family. As to quaternary structure, may interact with TEKT2. Detected in spermatozoa (at protein level). Predominantly expressed in testis and in spermatozoa from the caput and corpus epididymis.

It localises to the cytoplasm. The protein resides in the cell projection. Its subcellular location is the cilium. This chain is Coiled-coil domain-containing protein 172 (Ccdc172), found in Rattus norvegicus (Rat).